A 138-amino-acid polypeptide reads, in one-letter code: Ribosome-binding factor A (138 aa).

Positions 116–138 (VAQDSQHQEGPASPDAKPESTEE) are disordered.

It belongs to the RbfA family. As to quaternary structure, monomer. Binds 30S ribosomal subunits, but not 50S ribosomal subunits or 70S ribosomes.

It localises to the cytoplasm. In terms of biological role, one of several proteins that assist in the late maturation steps of the functional core of the 30S ribosomal subunit. Associates with free 30S ribosomal subunits (but not with 30S subunits that are part of 70S ribosomes or polysomes). Required for efficient processing of 16S rRNA. May interact with the 5'-terminal helix region of 16S rRNA. This is Ribosome-binding factor A from Pseudomonas syringae pv. tomato (strain ATCC BAA-871 / DC3000).